The following is a 352-amino-acid chain: RNA demethylase ALKBH5 (352 aa).

Residues 18–34 (RDKVFEYSNGEKRKYRE) show a composition bias toward basic and acidic residues. Residues 18–47 (RDKVFEYSNGEKRKYRESDDDESEYEERRD) are disordered. Residue Y107 is part of the active site. Residues N161, Y163, and H172 each contribute to the 2-oxoglutarate site. Residues H172, D174, and H234 each coordinate Fe cation. Residues C198 and C235 are joined by a disulfide bond. Residues H234 and R245 each contribute to the 2-oxoglutarate site. The tract at residues 260 to 352 (LDSNSLSPSI…PTRRVKMRRH (93 aa)) is disordered. A compositionally biased stretch (basic residues) spans 272–285 (PKRRHILKAKRSHR). Basic and acidic residues-rich tracts occupy residues 286 to 306 (KADP…ELQR) and 315 to 343 (RHDD…DHAP).

The protein belongs to the alkB family. As to quaternary structure, monomer. The cofactor is Fe(2+).

It is found in the nucleus speckle. The enzyme catalyses an N(6)-methyladenosine in mRNA + 2-oxoglutarate + O2 = an adenosine in mRNA + formaldehyde + succinate + CO2. Its function is as follows. Dioxygenase that specifically demethylates N(6)-methyladenosine (m6A) RNA, the most prevalent internal modification of messenger RNA (mRNA) in higher eukaryotes. Demethylates RNA by oxidative demethylation, which requires molecular oxygen, alpha-ketoglutarate and iron. Demethylation of m6A mRNA affects mRNA processing, translation and export. This is RNA demethylase ALKBH5 (alkbh5) from Danio rerio (Zebrafish).